Here is a 70-residue protein sequence, read N- to C-terminus: Dermaseptin-PH (70 aa).

The N-terminal stretch at 1–22 (MDILKKSLFLILFLGVVSLSIC) is a signal peptide. A propeptide spanning residues 23 to 44 (EEEKRENEEEMEQDDEQSEMKR) is cleaved from the precursor. The residue at position 67 (Gln-67) is a Glutamine amide. Residues 68–70 (GGQ) constitute a propeptide that is removed on maturation.

This sequence belongs to the frog skin active peptide (FSAP) family. Expressed by the skin glands.

It localises to the secreted. The protein localises to the target cell membrane. Functionally, antimicrobial peptide which inhibits the growth of Gram-negative (MIC=16-64 uM) and Gram-positive bacteria (MIC=32 uM), and pathogenic yeast Candida albicans (MIC=16 uM). Shows a broad-spectrum of anticancer activities against several cancer cell lines. Also shows slight cytotoxicity on human dermal microvascular endothelium cells (IC(50)=4.85 uM). Induces low hemolysis against horse erythrocytes. This is Dermaseptin-PH from Pithecopus hypochondrialis (Orange-legged leaf frog).